The sequence spans 122 residues: Small ribosomal subunit protein uS13 (122 aa).

The segment at 93–122 (RRGLPVRGQKTKTNARTRKGPKKTIANKKK) is disordered.

Belongs to the universal ribosomal protein uS13 family. As to quaternary structure, part of the 30S ribosomal subunit. Forms a loose heterodimer with protein S19. Forms two bridges to the 50S subunit in the 70S ribosome.

Functionally, located at the top of the head of the 30S subunit, it contacts several helices of the 16S rRNA. In the 70S ribosome it contacts the 23S rRNA (bridge B1a) and protein L5 of the 50S subunit (bridge B1b), connecting the 2 subunits; these bridges are implicated in subunit movement. Contacts the tRNAs in the A and P-sites. The sequence is that of Small ribosomal subunit protein uS13 from Clostridium beijerinckii (strain ATCC 51743 / NCIMB 8052) (Clostridium acetobutylicum).